The chain runs to 268 residues: Thymidylate synthase (268 aa).

Arg-27 lines the dUMP pocket. Residue His-57 coordinates (6R)-5,10-methylene-5,6,7,8-tetrahydrofolate. Position 132–133 (132–133) interacts with dUMP; it reads RR. The active-site Nucleophile is the Cys-152. Residues 172 to 175, Asn-183, and 213 to 215 each bind dUMP; these read RSAD and HVY. Asp-175 serves as a coordination point for (6R)-5,10-methylene-5,6,7,8-tetrahydrofolate. Ala-267 provides a ligand contact to (6R)-5,10-methylene-5,6,7,8-tetrahydrofolate.

The protein belongs to the thymidylate synthase family. Bacterial-type ThyA subfamily. As to quaternary structure, homodimer.

It localises to the cytoplasm. The catalysed reaction is dUMP + (6R)-5,10-methylene-5,6,7,8-tetrahydrofolate = 7,8-dihydrofolate + dTMP. It functions in the pathway pyrimidine metabolism; dTTP biosynthesis. Its function is as follows. Catalyzes the reductive methylation of 2'-deoxyuridine-5'-monophosphate (dUMP) to 2'-deoxythymidine-5'-monophosphate (dTMP) while utilizing 5,10-methylenetetrahydrofolate (mTHF) as the methyl donor and reductant in the reaction, yielding dihydrofolate (DHF) as a by-product. This enzymatic reaction provides an intracellular de novo source of dTMP, an essential precursor for DNA biosynthesis. In Kineococcus radiotolerans (strain ATCC BAA-149 / DSM 14245 / SRS30216), this protein is Thymidylate synthase.